A 344-amino-acid polypeptide reads, in one-letter code: RNA 3'-terminal phosphate cyclase (344 aa).

Residues Gln103 and 283–287 (HLADQ) each bind ATP. His308 serves as the catalytic Tele-AMP-histidine intermediate.

Belongs to the RNA 3'-terminal cyclase family. Type 1 subfamily.

It is found in the cytoplasm. The catalysed reaction is a 3'-end 3'-phospho-ribonucleotide-RNA + ATP = a 3'-end 2',3'-cyclophospho-ribonucleotide-RNA + AMP + diphosphate. In terms of biological role, catalyzes the conversion of 3'-phosphate to a 2',3'-cyclic phosphodiester at the end of RNA. The mechanism of action of the enzyme occurs in 3 steps: (A) adenylation of the enzyme by ATP; (B) transfer of adenylate to an RNA-N3'P to produce RNA-N3'PP5'A; (C) and attack of the adjacent 2'-hydroxyl on the 3'-phosphorus in the diester linkage to produce the cyclic end product. The biological role of this enzyme is unknown but it is likely to function in some aspects of cellular RNA processing. In Salmonella paratyphi C (strain RKS4594), this protein is RNA 3'-terminal phosphate cyclase.